We begin with the raw amino-acid sequence, 608 residues long: Phosphoenolpyruvate carboxykinase [GTP] (608 aa).

Substrate-binding positions include R82 and 222–224; that span reads YGG. Residues K231 and H251 each coordinate Mn(2+). S273 is a substrate binding site. 274–279 is a GTP binding site; it reads ACGKTN. C275 is an active-site residue. Residue D298 participates in Mn(2+) binding. Residue 389–391 coordinates substrate; the sequence is NSR. Residues R391, R422, and 517 to 520 contribute to the GTP site; that span reads FGDN.

Belongs to the phosphoenolpyruvate carboxykinase [GTP] family. As to quaternary structure, monomer. Mn(2+) is required as a cofactor.

Its subcellular location is the cytoplasm. The enzyme catalyses oxaloacetate + GTP = phosphoenolpyruvate + GDP + CO2. It functions in the pathway carbohydrate biosynthesis; gluconeogenesis. Functionally, catalyzes the conversion of oxaloacetate (OAA) to phosphoenolpyruvate (PEP), the rate-limiting step in the metabolic pathway that produces glucose from lactate and other precursors derived from the citric acid cycle. The chain is Phosphoenolpyruvate carboxykinase [GTP] from Paenarthrobacter aurescens (strain TC1).